We begin with the raw amino-acid sequence, 242 residues long: Type III pantothenate kinase (242 aa).

6–13 (DAGNTRLK) is an ATP binding site. Substrate contacts are provided by residues Y90 and 97–100 (GADR). D99 (proton acceptor) is an active-site residue. A K(+)-binding site is contributed by D119. S122 contacts ATP. T174 contacts substrate.

Belongs to the type III pantothenate kinase family. In terms of assembly, homodimer. NH4(+) serves as cofactor. The cofactor is K(+).

The protein localises to the cytoplasm. The enzyme catalyses (R)-pantothenate + ATP = (R)-4'-phosphopantothenate + ADP + H(+). It functions in the pathway cofactor biosynthesis; coenzyme A biosynthesis; CoA from (R)-pantothenate: step 1/5. Functionally, catalyzes the phosphorylation of pantothenate (Pan), the first step in CoA biosynthesis. This Marinobacter nauticus (strain ATCC 700491 / DSM 11845 / VT8) (Marinobacter aquaeolei) protein is Type III pantothenate kinase.